The sequence spans 355 residues: UPF0421 protein BCE33L2478 (355 aa).

The next 4 helical transmembrane spans lie at 19–39, 74–94, 109–129, and 131–151; these read IAVF…IFAV, FTFF…FTIV, TLTA…AFLI, and LATT…ILPP.

Belongs to the UPF0421 family.

The protein resides in the cell membrane. The sequence is that of UPF0421 protein BCE33L2478 from Bacillus cereus (strain ZK / E33L).